The chain runs to 182 residues: ATP-dependent protease subunit HslV (182 aa).

Thr10 is a catalytic residue. Na(+) contacts are provided by Ala166, Cys169, and Ser172.

Belongs to the peptidase T1B family. HslV subfamily. In terms of assembly, a double ring-shaped homohexamer of HslV is capped on each side by a ring-shaped HslU homohexamer. The assembly of the HslU/HslV complex is dependent on binding of ATP.

The protein resides in the cytoplasm. It catalyses the reaction ATP-dependent cleavage of peptide bonds with broad specificity.. With respect to regulation, allosterically activated by HslU binding. Protease subunit of a proteasome-like degradation complex believed to be a general protein degrading machinery. This chain is ATP-dependent protease subunit HslV, found in Rickettsia peacockii (strain Rustic).